We begin with the raw amino-acid sequence, 474 residues long: tRNA-2-methylthio-N(6)-dimethylallyladenosine synthase (474 aa).

The region spanning 3–120 (KKLHIKTWGC…LPEMINSVRG (118 aa)) is the MTTase N-terminal domain. Residues C12, C49, C83, C157, C161, and C164 each contribute to the [4Fe-4S] cluster site. Residues 143–375 (RAEGPTAFVS…QERINQQAMA (233 aa)) enclose the Radical SAM core domain. The 64-residue stretch at 378 to 441 (RRMLGTTQRI…PNSLRGKVVR (64 aa)) folds into the TRAM domain.

The protein belongs to the methylthiotransferase family. MiaB subfamily. In terms of assembly, monomer. [4Fe-4S] cluster is required as a cofactor.

The protein resides in the cytoplasm. The enzyme catalyses N(6)-dimethylallyladenosine(37) in tRNA + (sulfur carrier)-SH + AH2 + 2 S-adenosyl-L-methionine = 2-methylsulfanyl-N(6)-dimethylallyladenosine(37) in tRNA + (sulfur carrier)-H + 5'-deoxyadenosine + L-methionine + A + S-adenosyl-L-homocysteine + 2 H(+). Its function is as follows. Catalyzes the methylthiolation of N6-(dimethylallyl)adenosine (i(6)A), leading to the formation of 2-methylthio-N6-(dimethylallyl)adenosine (ms(2)i(6)A) at position 37 in tRNAs that read codons beginning with uridine. In Escherichia coli (strain SE11), this protein is tRNA-2-methylthio-N(6)-dimethylallyladenosine synthase.